We begin with the raw amino-acid sequence, 144 residues long: Large ribosomal subunit protein uL15 (144 aa).

The segment at 1–48 (MQLNNLKPAAGSKHAKRRVGRGIGSGLGKTAGRGHKGQKSRSGGFHKV) is disordered. Gly residues predominate over residues 21 to 31 (RGIGSGLGKTA).

Belongs to the universal ribosomal protein uL15 family. Part of the 50S ribosomal subunit.

Its function is as follows. Binds to the 23S rRNA. The protein is Large ribosomal subunit protein uL15 of Cupriavidus pinatubonensis (strain JMP 134 / LMG 1197) (Cupriavidus necator (strain JMP 134)).